The following is a 246-amino-acid chain: Probable phosphatase ASA_1316 (246 aa).

The Zn(2+) site is built by H8, H10, H16, H41, E74, H102, H132, D193, and H195.

This sequence belongs to the PHP family. Requires Zn(2+) as cofactor.

In Aeromonas salmonicida (strain A449), this protein is Probable phosphatase ASA_1316.